A 134-amino-acid chain; its full sequence is Profilin-2 (134 aa).

Cysteines 13 and 118 form a disulfide. The Involved in PIP2 interaction motif lies at 84–100; sequence AVIRGKKGSGGITIKKT. Thr-114 carries the post-translational modification Phosphothreonine.

It belongs to the profilin family. In terms of assembly, occurs in many kinds of cells as a complex with monomeric actin in a 1:1 ratio. In terms of processing, phosphorylated by MAP kinases.

The protein resides in the cytoplasm. It is found in the cytoskeleton. In terms of biological role, binds to actin and affects the structure of the cytoskeleton. At high concentrations, profilin prevents the polymerization of actin, whereas it enhances it at low concentrations. The chain is Profilin-2 from Olea europaea (Common olive).